Consider the following 87-residue polypeptide: Anaphase-promoting complex subunit 11 (87 aa).

The RING-type; atypical zinc finger occupies 35-77; it reads CVDCKIPGDDCPPVWGVCNHAFHMHCILKWLNANELQQCPMCR.

It belongs to the RING-box family. The APC/C is composed of at least 13 subunits that stay tightly associated throughout the cell cycle: anapc1, anapc2, anapc3, anapc4, anapc5, anapc6, anapc7, anapc8, anapc10, anapc11, cdc20, cdc26 and cdh1.

It localises to the nucleus. It functions in the pathway protein modification; protein ubiquitination. Functionally, component of the anaphase promoting complex/cyclosome (APC/C), a cell cycle-regulated E3 ubiquitin-protein ligase complex that controls progression through mitosis and the G1 phase of the cell cycle. This Dictyostelium discoideum (Social amoeba) protein is Anaphase-promoting complex subunit 11 (anapc11).